The chain runs to 156 residues: Transcription antitermination protein NusB (156 aa).

This sequence belongs to the NusB family.

Involved in transcription antitermination. Required for transcription of ribosomal RNA (rRNA) genes. Binds specifically to the boxA antiterminator sequence of the ribosomal RNA (rrn) operons. This Rickettsia africae (strain ESF-5) protein is Transcription antitermination protein NusB.